A 108-amino-acid polypeptide reads, in one-letter code: MEANAAVDGTGNPIPTSAVLTASAKHIGIRCMPENMAFLKCKKNDPNPEKCLEKGRDVTRCVLGLLKDLHQRCPKEMDAYVGCMYYYTNEFELCRKEQEAFEKVCPLK.

CHCH domains are found at residues 28 to 69 and 70 to 108; these read GIRC…LKDL and HQRCPKEMDAYVGCMYYYTNEFELCRKEQEAFEKVCPLK. 3 consecutive short sequence motifs (cx9C motif) follow at residues 31–41, 51–61, and 73–83; these read CMPENMAFLKC, CLEKGRDVTRC, and CPKEMDAYVGC. Disulfide bonds link cysteine 31–cysteine 61, cysteine 41–cysteine 51, cysteine 73–cysteine 105, and cysteine 83–cysteine 94. The Cx10C motif motif lies at 94 to 105; it reads CRKEQEAFEKVC.

The protein belongs to the complex I NDUFA8 subunit family. In terms of assembly, complex I is composed of at least 49 different subunits.

The protein resides in the mitochondrion. Its subcellular location is the mitochondrion intermembrane space. Its function is as follows. Accessory subunit of the mitochondrial membrane respiratory chain NADH dehydrogenase (Complex I), that is believed not to be involved in catalysis. Complex I functions in the transfer of electrons from NADH to the respiratory chain. The immediate electron acceptor for the enzyme is believed to be ubiquinone. The sequence is that of NADH dehydrogenase [ubiquinone] 1 alpha subcomplex subunit 8-A from Arabidopsis thaliana (Mouse-ear cress).